Consider the following 3046-residue polypeptide: Nucleosome-remodeling factor subunit BPTF (3046 aa).

The interval Met1–Ser232 is disordered. Pro residues predominate over residues Pro22 to Ser33. Over residues Thr62 to Ser72 the composition is skewed to low complexity. The segment covering Pro78–Thr87 has biased composition (pro residues). The segment covering Gly91–His110 has biased composition (gly residues). Residues His129 to Ala186 show a composition bias toward acidic residues. Residues Thr190–Thr203 show a composition bias toward low complexity. Basic residues predominate over residues Gly205–Arg215. Ser216 carries the phosphoserine modification. A DDT domain is found at Asn240–Thr300. The PHD-type 1 zinc finger occupies Asp390–His437. Basic and acidic residues-rich tracts occupy residues Ile567–Lys609 and Glu616–Asp628. Positions Ile567–Thr774 are disordered. Residue Ser572 is modified to Phosphoserine. Residues Glu574–Lys604 adopt a coiled-coil conformation. 2 stretches are compositionally biased toward polar residues: residues Asn631–Glu653 and Thr690–Pro705. Residues Asn640–Gly749 form an interaction with KEAP1 region. Positions Asn706–Ser723 are enriched in low complexity. The segment covering Lys725 to His738 has biased composition (basic and acidic residues). A phosphoserine mark is found at Ser763 and Ser817. Residues Tyr839–Phe921 are interaction with MAZ. Lys880 is subject to N6-acetyllysine. Residues Met978–Trp1007 are a coiled coil. The interval Tyr1057–Gln1157 is disordered. Thr1064 is subject to Phosphothreonine. Basic and acidic residues-rich tracts occupy residues Ile1087–Asp1102 and Asp1113–Ser1152. Residues Lys1088, Lys1138, and Lys1209 each participate in a glycyl lysine isopeptide (Lys-Gly) (interchain with G-Cter in SUMO2) cross-link. 4 disordered regions span residues Lys1215–Phe1339, Ile1371–Arg1448, Gly1465–Asp1537, and Asn1605–Lys1706. 3 stretches are compositionally biased toward polar residues: residues Thr1220–Pro1232, Gln1242–Asp1257, and Cys1266–Lys1285. Residue Ser1231 is modified to Phosphoserine. A compositionally biased stretch (basic and acidic residues) spans Tyr1287 to Cys1305. Residue Ser1300 is modified to Phosphoserine. Residue Thr1303 is modified to Phosphothreonine. Residue Ser1310 is modified to Phosphoserine. Over residues Val1372–Ser1386 the composition is skewed to low complexity. Composition is skewed to polar residues over residues Ser1409 to Asp1426 and Val1434 to Gln1444. Residues Lys1491–Gly1525 show a composition bias toward basic and acidic residues. Over residues Thr1629–Gln1656 the composition is skewed to polar residues. Lys1730 is covalently cross-linked (Glycyl lysine isopeptide (Lys-Gly) (interchain with G-Cter in SUMO2)). Disordered regions lie at residues Val1973–Gln2003 and Gln2041–Ser2070. The stretch at Glu2022 to Lys2050 forms a coiled coil. The segment covering Ile2054–Ser2070 has biased composition (low complexity). Residue Ser2098 is modified to Phosphoserine. Arg2155 carries the post-translational modification Omega-N-methylarginine. The tract at residues Thr2160–Gly2180 is disordered. Asymmetric dimethylarginine occurs at positions 2162, 2184, and 2191. Residues Val2232–Ile2256 are compositionally biased toward polar residues. Disordered regions lie at residues Val2232–Gln2270, Thr2346–Leu2549, Gln2714–Asn2733, and Pro2795–Thr2858. Low complexity-rich tracts occupy residues Gln2257 to Gln2270 and Thr2346 to Gly2362. The segment covering Glu2363 to Val2375 has biased composition (polar residues). Positions Pro2391 to Val2431 are enriched in low complexity. The span at Ser2432–Leu2485 shows a compositional bias: polar residues. Ser2465 bears the Phosphoserine mark. Positions Ser2486 to Gln2538 are enriched in low complexity. A coiled-coil region spans residues Asp2706–Gln2732. Over residues Gln2714–Arg2729 the composition is skewed to basic and acidic residues. A compositionally biased stretch (pro residues) spans Pro2795 to Ala2818. A compositionally biased stretch (basic and acidic residues) spans Lys2838 to Ser2847. Residues Lys2867–Thr2918 form a PHD-type 2 zinc finger. The Bromo domain maps to Pro2927–Phe3031.

This sequence belongs to the PBTF family. In terms of assembly, interacts with MAZ. Interacts with KEAP1. Component of the NURF-1 ISWI chromatin remodeling complex (also called the nucleosome-remodeling factor (NURF) complex) at least composed of SMARCA1 (isoform 2), BPTF, RBBP4 and RBBP7. Within the complex interacts with isoform 2 of SMARCA1. Component of the BPFT-SMARCA1 complex at least composed of SMARCA1 (isoform 1), BPFT, RBBP4 and RBBP7; the complex is catalytically inactive and does not remodel chromatin. Within the complex interacts with isoform 1 of SMARCA1. Component of the NURF-5 ISWI chromatin remodeling complex at least composed of SMARCA5/SNF2H and BPTF. Within NURF-5 ISWI chromatin remodeling complex interacts with SMARCA5/SNF2H. In terms of processing, phosphorylation enhances DNA-binding. Post-translationally, highly susceptible to proteolysis. As to expression, ubiquitously expressed, with highest levels in testis. Present in kidney, liver and brain. In the brain, highest levels are found in motor cortex (at protein level).

The protein resides in the cytoplasm. It is found in the nucleus. Regulatory subunit of the ATP-dependent NURF-1 and NURF-5 ISWI chromatin remodeling complexes, which form ordered nucleosome arrays on chromatin and facilitate access to DNA during DNA-templated processes such as DNA replication, transcription, and repair. The NURF-1 ISWI chromatin remodeling complex has a lower ATP hydrolysis rate than the NURF-5 ISWI chromatin remodeling complex. Within the NURF-1 ISWI chromatin-remodeling complex, binds to the promoters of En1 and En2 to positively regulate their expression and promote brain development. Histone-binding protein which binds to H3 tails trimethylated on 'Lys-4' (H3K4me3), which mark transcription start sites of active genes. Binds to histone H3 tails dimethylated on 'Lys-4' (H3K4Me2) to a lesser extent. May also regulate transcription through direct binding to DNA or transcription factors. The chain is Nucleosome-remodeling factor subunit BPTF (BPTF) from Homo sapiens (Human).